Reading from the N-terminus, the 151-residue chain is 3-dehydroquinate dehydratase (151 aa).

The active-site Proton acceptor is the Tyr26. The substrate site is built by Asn75, His81, and Asp88. Catalysis depends on His101, which acts as the Proton donor. Residues 102 to 103 (LS) and Arg112 each bind substrate.

The protein belongs to the type-II 3-dehydroquinase family. Homododecamer.

It catalyses the reaction 3-dehydroquinate = 3-dehydroshikimate + H2O. It participates in metabolic intermediate biosynthesis; chorismate biosynthesis; chorismate from D-erythrose 4-phosphate and phosphoenolpyruvate: step 3/7. Its function is as follows. Catalyzes a trans-dehydration via an enolate intermediate. This chain is 3-dehydroquinate dehydratase, found in Shewanella denitrificans (strain OS217 / ATCC BAA-1090 / DSM 15013).